The primary structure comprises 229 residues: Dephospho-CoA kinase domain-containing protein (229 aa).

The DPCK domain occupies 3–207; it reads LVGLTGGIAS…DCMQFLIIRA (205 aa). Position 8-15 (8-15) interacts with ATP; that stretch reads GGIASGKS.

Belongs to the CoaE family.

This Danio rerio (Zebrafish) protein is Dephospho-CoA kinase domain-containing protein (dcakd).